Reading from the N-terminus, the 268-residue chain is LOB domain-containing protein 13 (268 aa).

Residues 51-152 (TPCAACKLLR…SELTTVRTEI (102 aa)) enclose the LOB domain. The interval 191 to 268 (LLPPPPPPPP…SSDNNVHYFD (78 aa)) is disordered. 2 stretches are compositionally biased toward pro residues: residues 192–205 (LPPPPPPPPTPRPP) and 212–222 (PAPPPTPPVSL). The span at 223 to 243 (PSPSMVVSSSSSSNSSATNSM) shows a compositional bias: low complexity. Polar residues predominate over residues 250–268 (STAGYSNSLSSDNNVHYFD).

The protein belongs to the LOB domain-containing protein family. Expressed in shoots and roots and at low levels in flowers, but not in leaves or inflorescence stems.

This Arabidopsis thaliana (Mouse-ear cress) protein is LOB domain-containing protein 13 (LBD13).